Here is a 218-residue protein sequence, read N- to C-terminus: Guanylate kinase (218 aa).

Residues 5–188 (GNLFILSAPS…ALLDLTTIVN (184 aa)) enclose the Guanylate kinase-like domain. Residue 12–19 (APSGAGKS) coordinates ATP.

This sequence belongs to the guanylate kinase family.

Its subcellular location is the cytoplasm. It catalyses the reaction GMP + ATP = GDP + ADP. In terms of biological role, essential for recycling GMP and indirectly, cGMP. The polypeptide is Guanylate kinase (Colwellia psychrerythraea (strain 34H / ATCC BAA-681) (Vibrio psychroerythus)).